The following is a 319-amino-acid chain: ATP-dependent 6-phosphofructokinase (319 aa).

An ATP-binding site is contributed by glycine 11. Residue 21–25 coordinates ADP; the sequence is RAVAR. ATP contacts are provided by residues 72–73 and 102–105; these read RY and GDGS. Aspartate 103 contacts Mg(2+). 125-127 is a binding site for substrate; it reads TID. Aspartate 127 functions as the Proton acceptor in the catalytic mechanism. Arginine 154 serves as a coordination point for ADP. Residues arginine 162 and 169–171 each bind substrate; that span reads MGR. Residues 185–187 and arginine 211 each bind ADP; that span reads GAE. Residues glutamate 222, arginine 243, and 249–252 each bind substrate; that span reads HIVR.

The protein belongs to the phosphofructokinase type A (PFKA) family. ATP-dependent PFK group I subfamily. Prokaryotic clade 'B1' sub-subfamily. As to quaternary structure, homotetramer. Requires Mg(2+) as cofactor.

It is found in the cytoplasm. It carries out the reaction beta-D-fructose 6-phosphate + ATP = beta-D-fructose 1,6-bisphosphate + ADP + H(+). It functions in the pathway carbohydrate degradation; glycolysis; D-glyceraldehyde 3-phosphate and glycerone phosphate from D-glucose: step 3/4. Allosterically activated by ADP and other diphosphonucleosides, and allosterically inhibited by phosphoenolpyruvate. In terms of biological role, catalyzes the phosphorylation of D-fructose 6-phosphate to fructose 1,6-bisphosphate by ATP, the first committing step of glycolysis. The chain is ATP-dependent 6-phosphofructokinase from Lacticaseibacillus casei (strain BL23) (Lactobacillus casei).